Consider the following 994-residue polypeptide: Regulator of telomere elongation helicase 1 homolog (994 aa).

The region spanning 15–300 is the Helicase ATP-binding domain; that stretch reads PKLSVKFPFE…EETARSEADA (286 aa). Residue 50-57 participates in ATP binding; that stretch reads SPTGTGKT. Positions 142, 160, 169, and 208 each coordinate [4Fe-4S] cluster. Residues 251–254 carry the DEAH box motif; that stretch reads DEAH. Residues 876–895 are disordered; the sequence is FKIETPGPSTSTLTQKSEPP. Positions 882–892 are enriched in polar residues; that stretch reads GPSTSTLTQKS.

It belongs to the helicase family. RAD3/XPD subfamily.

The protein resides in the nucleus. It carries out the reaction ATP + H2O = ADP + phosphate + H(+). Its function is as follows. A probable ATP-dependent DNA helicase implicated in DNA repair and the maintenance of genomic stability. Acts as an anti-recombinase to counteract toxic recombination and limit crossover during meiosis. Regulates meiotic recombination and crossover homeostasis by physically dissociating strand invasion events and thereby promotes noncrossover repair by meiotic synthesis dependent strand annealing (SDSA) as well as disassembly of D loop recombination intermediates. This Caenorhabditis elegans protein is Regulator of telomere elongation helicase 1 homolog.